A 335-amino-acid chain; its full sequence is Probable cytosolic iron-sulfur protein assembly protein Ciao1 (335 aa).

7 WD repeats span residues 12–51 (GHKG…WSTK), 57–96 (GHKR…FECN), 101–140 (GHEN…EFEC), 146–185 (PHTQ…NDWD), 192–231 (SHTS…NTAG), 250–289 (QHSR…KPDE), and 301–335 (AHDQ…KVSE).

Belongs to the WD repeat CIA1 family.

Essential component of the cytosolic iron-sulfur (Fe/S) protein assembly machinery. Required for the maturation of extramitochondrial Fe/S proteins. The protein is Probable cytosolic iron-sulfur protein assembly protein Ciao1 of Drosophila simulans (Fruit fly).